A 1177-amino-acid chain; its full sequence is Zinc finger CCCH domain-containing protein 6 (1177 aa).

Over residues 1–12 (MTDSEHAGHDRE) the composition is skewed to basic and acidic residues. Disordered regions lie at residues 1 to 137 (MTDS…SKEY) and 179 to 206 (QESS…TEYR). The span at 13–31 (DGELEDGEIDDAGFEETQD) shows a compositional bias: acidic residues. A coiled-coil region spans residues 27–73 (EETQDQEAKENEKQKNEKAYRKSRKKHKKEREKKKSKRRKHEKHKHN). A compositionally biased stretch (basic and acidic residues) spans 32–46 (QEAKENEKQKNEKAY). A compositionally biased stretch (basic residues) spans 47–73 (RKSRKKHKKEREKKKSKRRKHEKHKHN). Residues 179-188 (QESSGSSFSK) are compositionally biased toward low complexity. 3 C3H1-type zinc fingers span residues 271–297 (KGKQ…HDAE), 299–326 (EKKK…HSEF), and 327–350 (PCKF…HDDL). Positions 347 to 383 (HDDLTKETRKLLDKVLNADEELVNEDERELEELRKRG) form a coiled coil. 8 disordered regions span residues 383–416 (GITP…FETD), 446–587 (PPAF…ESMQ), 622–654 (QQQP…SASG), 670–767 (RYQE…KKPH), 780–826 (PKKL…SERE), 942–988 (EQSG…SSRS), 1043–1101 (DPRD…PVDG), and 1132–1162 (LLRP…DKPL). A compositionally biased stretch (low complexity) spans 493–502 (HPGSPGHHPC). 2 stretches are compositionally biased toward polar residues: residues 512–522 (ENPSLLPSSSE) and 564–587 (SSPA…ESMQ). The segment covering 713–728 (RTLQKQTGTLRNQQLP) has biased composition (polar residues). Positions 753–767 (PRLRTVPRQDIKKPH) are enriched in basic and acidic residues. Residues 955 to 967 (GDPRLQKNFDPRL) show a composition bias toward basic and acidic residues. Composition is skewed to polar residues over residues 1050 to 1064 (LSAT…GENT) and 1077 to 1093 (KNQP…NTTA). Serine 1150 is modified (phosphoserine).

This Mus musculus (Mouse) protein is Zinc finger CCCH domain-containing protein 6 (Zc3h6).